The primary structure comprises 1347 residues: Protocadherin-11 X-linked (1347 aa).

Residues methionine 1–alanine 23 form the signal peptide. The Extracellular portion of the chain corresponds to glutamine 24–lysine 812. Cadherin domains lie at lysine 26 to phenylalanine 139, proline 140 to phenylalanine 249, lysine 250 to isoleucine 355, asparagine 362 to phenylalanine 466, threonine 467 to phenylalanine 570, threonine 571 to phenylalanine 673, and proline 677 to threonine 795. N-linked (GlcNAc...) asparagine glycans are attached at residues asparagine 27, asparagine 48, and asparagine 54. Residue asparagine 344 is glycosylated (N-linked (GlcNAc...) asparagine). N-linked (GlcNAc...) asparagine glycosylation occurs at asparagine 553. N-linked (GlcNAc...) asparagine glycosylation is present at asparagine 773. Residues isoleucine 813–valine 833 form a helical membrane-spanning segment. Over valine 834–leucine 1347 the chain is Cytoplasmic. Disordered stretches follow at residues leucine 1057–glutamine 1091, arginine 1097–phenylalanine 1116, and threonine 1325–leucine 1347.

It localises to the cell membrane. In terms of biological role, potential calcium-dependent cell-adhesion protein. The protein is Protocadherin-11 X-linked (PCDH11X) of Pan troglodytes (Chimpanzee).